Here is a 176-residue protein sequence, read N- to C-terminus: Disulfide bond formation protein B (176 aa).

At 1–14 the chain is on the cytoplasmic side; it reads MLRFLNRCSRGRGA. Residues 15–31 traverse the membrane as a helical segment; it reads WLLLAFTALALELTALY. The Periplasmic portion of the chain corresponds to 32-49; it reads FQHVMLLKPCVLCIYQRS. C41 and C44 are oxidised to a cystine. The chain crosses the membrane as a helical span at residues 50 to 65; sequence ALWGVFAAGIVGAIAP. Topologically, residues 66–71 are cytoplasmic; the sequence is SSLLRY. The chain crosses the membrane as a helical span at residues 72–89; sequence PAIALWIYSSYEGIRLAW. The Periplasmic segment spans residues 90-144; that stretch reads KHTDILLNPSPFTTCDFFVSFPSWLPLDKWLPAIFNATGDCSERQWSFLSMEMPQ. C104 and C130 are disulfide-bonded. A helical transmembrane segment spans residues 145–163; that stretch reads WLLGIFAAYLLIAVLVLIA. Over 164–176 the chain is Cytoplasmic; the sequence is QPFRSKRRDLFSR.

It belongs to the DsbB family.

The protein resides in the cell inner membrane. Its function is as follows. Required for disulfide bond formation in some periplasmic proteins. Acts by oxidizing the DsbA protein. This is Disulfide bond formation protein B from Pectobacterium atrosepticum (strain SCRI 1043 / ATCC BAA-672) (Erwinia carotovora subsp. atroseptica).